Here is a 223-residue protein sequence, read N- to C-terminus: Putative germin-like protein 2-3 (223 aa).

Residues 1-28 form the signal peptide; it reads MAAIRASFLLAAAALLALWCSDHGGVVA. C38 and C53 are joined by a disulfide. Residues 67 to 217 form the Cupin type-1 domain; the sequence is SGLHMAGNTT…AFQVEKTVVD (151 aa). A glycan (N-linked (GlcNAc...) asparagine) is linked at N74. Mn(2+) is bound by residues H115, H117, E122, and H163.

This sequence belongs to the germin family. Oligomer (believed to be a pentamer but probably hexamer).

The protein localises to the secreted. It is found in the extracellular space. It localises to the apoplast. May play a role in plant defense. Probably has no oxalate oxidase activity even if the active site is conserved. This is Putative germin-like protein 2-3 from Oryza sativa subsp. japonica (Rice).